Consider the following 152-residue polypeptide: MRLLIAAVGKAKAGPEQDLFRQYCRRLSPPPVLKEVEEKRPLAGPQLKAREAELLLATLPEGAKVVALDEKGRDIGSVDFAHRLRDWRDSGCQDVAFLIGGADGHGDAVRERADLLLSFGRMTWPHMLVRALLAEQLWRAHSILTGHPYHRP.

S-adenosyl-L-methionine is bound by residues Leu-68, Gly-100, and 119–124; that span reads FGRMTW.

It belongs to the RNA methyltransferase RlmH family. In terms of assembly, homodimer.

It localises to the cytoplasm. It carries out the reaction pseudouridine(1915) in 23S rRNA + S-adenosyl-L-methionine = N(3)-methylpseudouridine(1915) in 23S rRNA + S-adenosyl-L-homocysteine + H(+). Functionally, specifically methylates the pseudouridine at position 1915 (m3Psi1915) in 23S rRNA. The sequence is that of Ribosomal RNA large subunit methyltransferase H from Paramagnetospirillum magneticum (strain ATCC 700264 / AMB-1) (Magnetospirillum magneticum).